Here is a 155-residue protein sequence, read N- to C-terminus: Large ribosomal subunit protein uL15 (155 aa).

Residues 1 to 13 (MKLNELRDCEGAT) are compositionally biased toward basic and acidic residues. Residues 1–47 (MKLNELRDCEGATKNRKRIGRGIGSGTGKTGGRGVKGQKSRSGVSLN) form a disordered region. Over residues 21-35 (RGIGSGTGKTGGRGV) the composition is skewed to gly residues.

Belongs to the universal ribosomal protein uL15 family. In terms of assembly, part of the 50S ribosomal subunit.

In terms of biological role, binds to the 23S rRNA. The protein is Large ribosomal subunit protein uL15 of Bartonella tribocorum (strain CIP 105476 / IBS 506).